Reading from the N-terminus, the 25-residue chain is FNAGGHINHSLFWQNLAPASSNEAK.

His9 contacts Mn(2+).

The protein belongs to the iron/manganese superoxide dismutase family. As to quaternary structure, homotetramer. The cofactor is Mn(2+).

It is found in the mitochondrion matrix. It catalyses the reaction 2 superoxide + 2 H(+) = H2O2 + O2. In terms of biological role, destroys superoxide anion radicals which are normally produced within the cells and which are toxic to biological systems. The sequence is that of Superoxide dismutase [Mn], mitochondrial from Alternaria alternata (Alternaria rot fungus).